The sequence spans 403 residues: Aminomethyltransferase, mitochondrial (403 aa).

A mitochondrion-targeting transit peptide spans 1-28 (MQRAMTVVPHLGLRLQALPLALGRPLSR). 3 residues coordinate substrate: E232, R261, and Y399.

The protein belongs to the GcvT family. The glycine cleavage system is composed of four proteins: P, T, L and H.

The protein localises to the mitochondrion. The enzyme catalyses N(6)-[(R)-S(8)-aminomethyldihydrolipoyl]-L-lysyl-[protein] + (6S)-5,6,7,8-tetrahydrofolate = N(6)-[(R)-dihydrolipoyl]-L-lysyl-[protein] + (6R)-5,10-methylene-5,6,7,8-tetrahydrofolate + NH4(+). The glycine cleavage system catalyzes the degradation of glycine. The chain is Aminomethyltransferase, mitochondrial from Canis lupus familiaris (Dog).